Here is a 146-residue protein sequence, read N- to C-terminus: GFLTAEEKSLVNDLWSKVNVDEVGGEALGRLLVVYPWTQRFFQSFGDLSSADAIMGNGKVKAHGKKVLNSFSDGLKHIDDLKGTFAKLSELHCDKLHVDPENFKLLGNVLVCVLAHHFGNEFTPPVQAAYQKVVAGVANALAHKYH.

Positions 2–146 (FLTAEEKSLV…VANALAHKYH (145 aa)) constitute a Globin domain. Position 44 is a phosphoserine (S44). K59 is modified (N6-acetyllysine). Position 63 (H63) interacts with heme b. An N6-acetyllysine modification is found at K82. Heme b is bound at residue H92. C93 carries the S-nitrosocysteine modification. K144 bears the N6-acetyllysine mark.

It belongs to the globin family. In terms of assembly, heterotetramer of two alpha chains and two beta chains. In terms of tissue distribution, red blood cells.

In terms of biological role, involved in oxygen transport from the lung to the various peripheral tissues. The chain is Hemoglobin subunit beta (HBB) from Proteles cristata (Aardwolf).